We begin with the raw amino-acid sequence, 1158 residues long: Voltage-gated inwardly rectifying potassium channel KCNH2 (1158 aa).

Residues M1 to Y402 lie on the Cytoplasmic side of the membrane. Positions T17–G88 constitute a PAS domain. Positions R92–D144 constitute a PAC domain. The interval R232–L314 is disordered. Residue S239 is modified to Phosphoserine. Over residues P258–R269 the composition is skewed to polar residues. A phosphoserine mark is found at S283, S284, S319, and S350. The helical transmembrane segment at S403 to F423 threads the bilayer. The Extracellular portion of the chain corresponds to T424–Q449. A helical transmembrane segment spans residues P450–F470. The Cytoplasmic segment spans residues R471–K494. The chain crosses the membrane as a helical span at residues G495–G515. Over S516 to L519 the chain is Extracellular. The chain crosses the membrane as a helical; Voltage-sensor span at residues I520–R540. Over Y541–A546 the chain is Cytoplasmic. Residues A547–W567 traverse the membrane as a helical segment. The Extracellular portion of the chain corresponds to Y568–Y610. The N-linked (GlcNAc...) asparagine glycan is linked to N597. Positions V611–P631 form an intramembrane region, pore-forming. The short motif at S623 to N628 is the Selectivity filter element. Topologically, residues N632–K637 are extracellular. A helical membrane pass occupies residues I638 to V658. The Cytoplasmic portion of the chain corresponds to S659–S1158. A cNMP-binding domain region spans residues P741 to L841. The tract at residues G869–S987 is disordered. A phosphoserine mark is found at S870 and S873. Positions R882–R891 are enriched in basic residues. Residues G910–W926 show a composition bias toward gly residues. Residues G927 to E938 are compositionally biased toward low complexity. Residues S959–G969 show a composition bias toward pro residues. R1013 bears the Omega-N-methylarginine mark. A coiled-coil region spans residues R1034 to T1061. Positions F1116–S1158 are disordered. S1136 is modified (phosphoserine).

It belongs to the potassium channel family. H (Eag) (TC 1.A.1.20) subfamily. Kv11.1/KCNH2 sub-subfamily. In terms of assembly, the potassium channel is probably composed of a homo- or heterotetrameric complex of pore-forming alpha subunits that can associate with modulating beta subunits. Interacts with DNAJB12 and DNAJB14; chaperones DNAJB12 and DNAJB14 promote tetramerization. Heteromultimer with KCNH6/ERG2 and KCNH7/ERG3. Interacts with ALG10B. Forms a stable complex with KCNE1 or KCNE2, and that this heteromultimerization regulates Inward rectifier potassium channel activity. Interacts with CANX. The core-glycosylated, but not the fully glycosylated form interacts with RNF207. Interacts with NDFIP1 and NDFIP2; this interaction decreases the cell membrane expression by targeting KCNH2, through interaction with NEDD4L, for the degradation through the multivesicular bodies (MVBs)-lysosomal pathway. Phosphorylated on serine and threonine residues. Phosphorylation by PKA inhibits ion conduction. In terms of tissue distribution, highly expressed in left and right atria of the heart, in cortex and hippocampus; detected at intermediate levels in left and right ventricle, Purkinje fibers, cerebellum, thalamus and basal ganglia; detected at low levels in liver, spleen and kidney.

The protein resides in the cell membrane. It catalyses the reaction K(+)(in) = K(+)(out). Its function is as follows. Pore-forming (alpha) subunit of voltage-gated inwardly rectifying potassium channel. Characterized by unusual gating kinetics by producing relatively small outward currents during membrane depolarization and large inward currents during subsequent repolarization which reflect a rapid inactivation during depolarization and quick recovery from inactivation but slow deactivation (closing) during repolarization. Channel properties are modulated by cAMP and subunit assembly. Forms a stable complex with KCNE1 or KCNE2, and that this heteromultimerization regulates inward rectifier potassium channel activity. The chain is Voltage-gated inwardly rectifying potassium channel KCNH2 from Canis lupus familiaris (Dog).